Consider the following 569-residue polypeptide: DNA-binding protein eta2 (569 aa).

Disordered stretches follow at residues 1-26 and 133-159; these read MMLA…TLSC and KRKI…AKKR. The segment covering 9–26 has biased composition (polar residues); sequence INENQGTRSNLESPTLSC. Ser21 bears the Phosphoserine mark. Myb-like domains are found at residues 322–371 and 377–459; these read LDPK…RFVV and ETID…EKTI. Residues 459 to 487 form a disordered region; that stretch reads IASYSSNQRQEEDQGKKRKKRKKKKSKGK. Basic residues predominate over residues 474–487; it reads KKRKKRKKKKSKGK.

The protein localises to the nucleus. In Schizosaccharomyces pombe (strain 972 / ATCC 24843) (Fission yeast), this protein is DNA-binding protein eta2 (eta2).